The chain runs to 558 residues: uncharacterized protein (558 aa).

Low complexity predominate over residues 338–354 (STSTSTSTSTSSSNDLN). A disordered region spans residues 338 to 380 (STSTSTSTSTSSSNDLNLDSDSDDSDSDDSDSDSDSDSDSEID). Acidic residues predominate over residues 355–380 (LDSDSDDSDSDDSDSDSDSDSDSEID).

It localises to the plastid. This is an uncharacterized protein from Euglena longa (Euglenophycean alga).